Reading from the N-terminus, the 666-residue chain is Polyamine deacetylase HDAC10 (666 aa).

The tract at residues Met1–Gly323 is histone deacetylase. His135 is a catalytic residue.

Belongs to the histone deacetylase family. HD type 2 subfamily. As to quaternary structure, interacts with HDAC3. Interacts with HDAC2 and NCOR2/SMRT. Interacts with HSPA8/HSC70. Interacts with MSH2. As to expression, widely expressed.

It is found in the cytoplasm. It localises to the nucleus. It catalyses the reaction N(8)-acetylspermidine + H2O = spermidine + acetate. The catalysed reaction is N-acetylputrescine + H2O = putrescine + acetate. The enzyme catalyses N-acetylcadaverine + H2O = cadaverine + acetate. It carries out the reaction N(6)-acetyl-L-lysyl-[protein] + H2O = L-lysyl-[protein] + acetate. Functionally, polyamine deacetylase (PDAC), which acts preferentially on N(8)-acetylspermidine, and also on acetylcadaverine and acetylputrescine. Exhibits attenuated catalytic activity toward N(1),N(8)-diacetylspermidine and very low activity, if any, toward N(1)-acetylspermidine. Histone deacetylase activity has been observed in vitro. Has also been shown to be involved in MSH2 deacetylation. The physiological relevance of protein/histone deacetylase activity is unclear and could be very weak. May play a role in the promotion of late stages of autophagy, possibly autophagosome-lysosome fusion and/or lysosomal exocytosis in neuroblastoma cells. May play a role in homologous recombination. May promote DNA mismatch repair. This is Polyamine deacetylase HDAC10 (Hdac10) from Mus musculus (Mouse).